Consider the following 212-residue polypeptide: Anaphase-promoting complex subunit 10 (212 aa).

The DOC domain maps to 12–196 (MDEEERTSSR…PSAVLEARPG (185 aa)).

The protein belongs to the APC10 family. The APC/C complex is probably composed of at least 12 subunits: apc-2, apc-10, apc-11, cdc-26, emb-1, emb-27, emb-30, mat-1, mat-2, mat-3, such-1 and gfi-3.

It participates in protein modification; protein ubiquitination. Functionally, probable component of the anaphase promoting complex/cyclosome (APC/C), a cell cycle-regulated E3 ubiquitin ligase that controls progression through mitosis and the G1 phase of the cell cycle. The APC/C complex acts by mediating ubiquitination and subsequent degradation of target proteins. This chain is Anaphase-promoting complex subunit 10, found in Caenorhabditis elegans.